We begin with the raw amino-acid sequence, 595 residues long: Aspartate--tRNA(Asp/Asn) ligase (595 aa).

Glu-175 contacts L-aspartate. The aspartate stretch occupies residues 199–202; that stretch reads QQYK. L-aspartate-binding residues include Arg-221 and His-454. 221 to 223 serves as a coordination point for ATP; it reads RDE. Residue Glu-488 participates in ATP binding. Residue Arg-495 coordinates L-aspartate. Residue 540–543 coordinates ATP; the sequence is GIDR.

It belongs to the class-II aminoacyl-tRNA synthetase family. Type 1 subfamily. Homodimer.

It localises to the cytoplasm. It carries out the reaction tRNA(Asx) + L-aspartate + ATP = L-aspartyl-tRNA(Asx) + AMP + diphosphate. Functionally, aspartyl-tRNA synthetase with relaxed tRNA specificity since it is able to aspartylate not only its cognate tRNA(Asp) but also tRNA(Asn). Reaction proceeds in two steps: L-aspartate is first activated by ATP to form Asp-AMP and then transferred to the acceptor end of tRNA(Asp/Asn). In Sinorhizobium medicae (strain WSM419) (Ensifer medicae), this protein is Aspartate--tRNA(Asp/Asn) ligase.